Consider the following 461-residue polypeptide: ATP-dependent protease ATPase subunit HslU (461 aa).

ATP contacts are provided by residues I18 and 60–65 (GVGKTE). Positions 157–178 (EGSSVKPEPTAQQKESRQKMRK) are disordered. ATP-binding residues include D273, E339, and R411.

It belongs to the ClpX chaperone family. HslU subfamily. As to quaternary structure, a double ring-shaped homohexamer of HslV is capped on each side by a ring-shaped HslU homohexamer. The assembly of the HslU/HslV complex is dependent on binding of ATP.

The protein resides in the cytoplasm. In terms of biological role, ATPase subunit of a proteasome-like degradation complex; this subunit has chaperone activity. The binding of ATP and its subsequent hydrolysis by HslU are essential for unfolding of protein substrates subsequently hydrolyzed by HslV. HslU recognizes the N-terminal part of its protein substrates and unfolds these before they are guided to HslV for hydrolysis. The protein is ATP-dependent protease ATPase subunit HslU of Magnetococcus marinus (strain ATCC BAA-1437 / JCM 17883 / MC-1).